The primary structure comprises 399 residues: Ubiquitin-like modifier-activating enzyme 5 (399 aa).

Residues G76, D97, K120, N143, and N177 each contribute to the ATP site. Zn(2+)-binding residues include C219 and C222. C243 serves as the catalytic Glycyl thioester intermediate. Residues C296 and C301 each contribute to the Zn(2+) site.

Belongs to the ubiquitin-activating E1 family. UBA5 subfamily.

E1-like enzyme which activates UFM1. The sequence is that of Ubiquitin-like modifier-activating enzyme 5 from Drosophila mojavensis (Fruit fly).